A 462-amino-acid polypeptide reads, in one-letter code: ATP synthase subunit beta (462 aa).

150-157 contacts ATP; it reads GGAGVGKT.

The protein belongs to the ATPase alpha/beta chains family. In terms of assembly, F-type ATPases have 2 components, CF(1) - the catalytic core - and CF(0) - the membrane proton channel. CF(1) has five subunits: alpha(3), beta(3), gamma(1), delta(1), epsilon(1). CF(0) has three main subunits: a(1), b(2) and c(9-12). The alpha and beta chains form an alternating ring which encloses part of the gamma chain. CF(1) is attached to CF(0) by a central stalk formed by the gamma and epsilon chains, while a peripheral stalk is formed by the delta and b chains. In this bacterium the a and b subunits are transcribed but do not seem to be translated, thus the ATP synthase consists of the alpha, beta, gamma, delta, epsilon and c subunits.

Its subcellular location is the cell membrane. The catalysed reaction is ATP + H2O + 4 H(+)(in) = ADP + phosphate + 5 H(+)(out). Functionally, produces ATP from ADP in the presence of a proton gradient across the membrane. The catalytic sites are hosted primarily by the beta subunits. In Moorella thermoacetica (strain ATCC 39073 / JCM 9320), this protein is ATP synthase subunit beta.